Here is a 72-residue protein sequence, read N- to C-terminus: Translation initiation factor IF-1 (72 aa).

The region spanning Met-1–Lys-72 is the S1-like domain.

The protein belongs to the IF-1 family. As to quaternary structure, component of the 30S ribosomal translation pre-initiation complex which assembles on the 30S ribosome in the order IF-2 and IF-3, IF-1 and N-formylmethionyl-tRNA(fMet); mRNA recruitment can occur at any time during PIC assembly.

Its subcellular location is the cytoplasm. Its function is as follows. One of the essential components for the initiation of protein synthesis. Stabilizes the binding of IF-2 and IF-3 on the 30S subunit to which N-formylmethionyl-tRNA(fMet) subsequently binds. Helps modulate mRNA selection, yielding the 30S pre-initiation complex (PIC). Upon addition of the 50S ribosomal subunit IF-1, IF-2 and IF-3 are released leaving the mature 70S translation initiation complex. The protein is Translation initiation factor IF-1 of Nitrosomonas eutropha (strain DSM 101675 / C91 / Nm57).